Consider the following 233-residue polypeptide: Large ribosomal subunit protein uL1 (233 aa).

It belongs to the universal ribosomal protein uL1 family. Part of the 50S ribosomal subunit.

In terms of biological role, binds directly to 23S rRNA. The L1 stalk is quite mobile in the ribosome, and is involved in E site tRNA release. Protein L1 is also a translational repressor protein, it controls the translation of the L11 operon by binding to its mRNA. This Vibrio vulnificus (strain CMCP6) protein is Large ribosomal subunit protein uL1.